Reading from the N-terminus, the 137-residue chain is ATP synthase epsilon chain (137 aa).

It belongs to the ATPase epsilon chain family. F-type ATPases have 2 components, CF(1) - the catalytic core - and CF(0) - the membrane proton channel. CF(1) has five subunits: alpha(3), beta(3), gamma(1), delta(1), epsilon(1). CF(0) has three main subunits: a, b and c.

The protein localises to the cellular thylakoid membrane. Functionally, produces ATP from ADP in the presence of a proton gradient across the membrane. The sequence is that of ATP synthase epsilon chain from Trichormus variabilis (strain ATCC 29413 / PCC 7937) (Anabaena variabilis).